The primary structure comprises 133 residues: Cytochrome b5 (133 aa).

One can recognise a Cytochrome b5 heme-binding domain in the interval 4–86 (EKEYILDEIS…LKNYLVGNFK (83 aa)). Positions 45 and 69 each coordinate heme. Residues 108–128 (SGTGIMLIVLMALFAIAYGYY) form a helical membrane-spanning segment.

This sequence belongs to the cytochrome b5 family. As to quaternary structure, interacts with alternative squalene epoxidase PHATRDRAFT_45494.

It localises to the endoplasmic reticulum membrane. In terms of biological role, hemoprotein that functions as an electron carrier for membrane bound monooxygenases involved in sterol biosynthesis. The protein is Cytochrome b5 of Phaeodactylum tricornutum (strain CCAP 1055/1).